The chain runs to 89 residues: UPF0335 protein Nwi_0989 (89 aa).

It belongs to the UPF0335 family.

The protein is UPF0335 protein Nwi_0989 of Nitrobacter winogradskyi (strain ATCC 25391 / DSM 10237 / CIP 104748 / NCIMB 11846 / Nb-255).